The primary structure comprises 674 residues: ATP-dependent DNA helicase Hel308 (674 aa).

ATP contacts are provided by residues Gln27 and 44–51 (VPTAAGKT). The 167-residue stretch at 31–197 (IEQIRKGRNV…WLDASLIKSD (167 aa)) folds into the Helicase ATP-binding domain. The DEAH box signature appears at 142–145 (DEIH). Positions 224-411 (SINQIIRETV…EAKVRFNTLA (188 aa)) constitute a Helicase C-terminal domain.

This sequence belongs to the helicase family. Hel308 subfamily. Monomer.

The catalysed reaction is Couples ATP hydrolysis with the unwinding of duplex DNA by translocating in the 3'-5' direction.. The enzyme catalyses ATP + H2O = ADP + phosphate + H(+). Functionally, DNA-dependent ATPase and 3'-5' DNA helicase that may be involved in repair of stalled replication forks. In Thermoplasma acidophilum (strain ATCC 25905 / DSM 1728 / JCM 9062 / NBRC 15155 / AMRC-C165), this protein is ATP-dependent DNA helicase Hel308.